The primary structure comprises 261 residues: Ribosomal RNA small subunit methyltransferase A (261 aa).

N15, I17, G42, E64, D90, and N109 together coordinate S-adenosyl-L-methionine.

This sequence belongs to the class I-like SAM-binding methyltransferase superfamily. rRNA adenine N(6)-methyltransferase family. RsmA subfamily.

The protein resides in the cytoplasm. It carries out the reaction adenosine(1518)/adenosine(1519) in 16S rRNA + 4 S-adenosyl-L-methionine = N(6)-dimethyladenosine(1518)/N(6)-dimethyladenosine(1519) in 16S rRNA + 4 S-adenosyl-L-homocysteine + 4 H(+). Its function is as follows. Specifically dimethylates two adjacent adenosines (A1518 and A1519) in the loop of a conserved hairpin near the 3'-end of 16S rRNA in the 30S particle. May play a critical role in biogenesis of 30S subunits. In Wolbachia sp. subsp. Brugia malayi (strain TRS), this protein is Ribosomal RNA small subunit methyltransferase A.